Here is a 1165-residue protein sequence, read N- to C-terminus: Serine/threonine-protein kinase/endoribonuclease ireA (1165 aa).

Residues 1–27 (MRWRLPGARTTLPASVALLLLPILVAP) form the signal peptide. The Lumenal segment spans residues 28–504 (QQLQEHDDLP…STIIRKGWDN (477 aa)). Residue asparagine 152 is glycosylated (N-linked (GlcNAc...) asparagine). The chain crosses the membrane as a helical span at residues 505 to 525 (AVDIFVTILLLFFGAFIYFNS). Residues 526–1165 (HNIQELAKQK…RFKRYFTPVE (640 aa)) lie on the Cytoplasmic side of the membrane. Residues 547 to 668 (QPPLSTPSTP…SEGESKDQAD (122 aa)) are disordered. Composition is skewed to basic and acidic residues over residues 591 to 600 (ATPKPKRDRS) and 611 to 620 (KIREPSRGPD). Over residues 637–655 (PKKKARRGRRGGKNHRRGK) the composition is skewed to basic residues. Residues 656–668 (KPDSEGESKDQAD) show a composition bias toward basic and acidic residues. One can recognise a Protein kinase domain in the interval 711–1026 (VFSDVVLGHG…ASAVLMHPFF (316 aa)). ATP contacts are provided by residues 717 to 725 (LGHGSHGTV) and lysine 739. Catalysis depends on aspartate 832, which acts as the Proton acceptor. Residues 899–919 (AIQGGESQHTESSEPAVVDPQ) form a disordered region. The KEN domain maps to 1029-1163 (PSDRLSFLCD…IDRFKRYFTP (135 aa)).

The protein belongs to the protein kinase superfamily. Ser/Thr protein kinase family. Homodimer; in response to the accumulation of unfolded proteins. Requires Mg(2+) as cofactor. Post-translationally, autophosphorylated mainly on serine residues.

It is found in the membrane. The catalysed reaction is L-seryl-[protein] + ATP = O-phospho-L-seryl-[protein] + ADP + H(+). The enzyme catalyses L-threonyl-[protein] + ATP = O-phospho-L-threonyl-[protein] + ADP + H(+). With respect to regulation, 8-formyl-7-hydroxy-4-methylcoumarin inhibits the endonuclease activity and prebvent the splicing if the hacA mRNA. The kinase domain is activated by trans-autophosphorylation. Kinase activity is required for activation of the endoribonuclease domain. Functionally, senses unfolded proteins in the lumen of the endoplasmic reticulum (ER) via its N-terminal domain which leads to enzyme auto-activation. The active endoribonuclease domain responds by cleaving an intron from the downstream cytoplasmic mRNA hacA, allowing for the translation of a transcription factor that coordinates a series of adaptive responses that are collectively known as the unfolded protein response (UPR). In the absence of ER stress, ireA controls dual signaling circuits that are both hacA-dependent and hacA-independent and which contribute to the expression of traits that are essential for virulence. The polypeptide is Serine/threonine-protein kinase/endoribonuclease ireA (Aspergillus fumigatus (strain ATCC MYA-4609 / CBS 101355 / FGSC A1100 / Af293) (Neosartorya fumigata)).